The sequence spans 407 residues: Uronyl 2-sulfotransferase (407 aa).

Positions methionine 1–alanine 20 are disordered. Over methionine 1–tyrosine 49 the chain is Cytoplasmic. A helical; Signal-anchor for type II membrane protein membrane pass occupies residues glycine 50–glycine 70. Topologically, residues glycine 71–arginine 407 are lumenal. N-linked (GlcNAc...) asparagine glycosylation is found at asparagine 85, asparagine 141, and asparagine 156. Residue histidine 169 is part of the active site. N-linked (GlcNAc...) asparagine glycans are attached at residues asparagine 174 and asparagine 320. A compositionally biased stretch (acidic residues) spans threonine 386–tryptophan 400. The interval threonine 386 to arginine 407 is disordered.

The protein belongs to the sulfotransferase 3 family.

It is found in the golgi apparatus membrane. Sulfotransferase that catalyzes the transfer of sulfate to the position 2 of uronyl residues in glycosaminoglycan chains. Has mainly activity toward iduronyl residues in dermatan sulfate, and weaker activity toward glucuronyl residues of chondroitin sulfate. Has no activity toward desulfated N-resulfated heparin. The chain is Uronyl 2-sulfotransferase from Mus musculus (Mouse).